Reading from the N-terminus, the 223-residue chain is Cytotoxic T-lymphocyte protein 4 (223 aa).

A signal peptide spans 1-35 (MACLGLRRYKAQLQLPSRTWPFVALLTLLFIPVFS). Positions 36-145 (EAIQVTQPSV…PPPYFVGMGN (110 aa)) constitute an Ig-like V-type domain. Residues 36-161 (EAIQVTQPSV…IDPEPCPDSD (126 aa)) are Extracellular-facing. Residues 46–50 (VLASS) are homodimerization. Disulfide bonds link Cys-58-Cys-129 and Cys-85-Cys-103. Asn-108 and Asn-113 each carry an N-linked (GlcNAc...) asparagine glycan. Residues 134 to 139 (MYPPPY) form an important for interaction with CD80 and CD86 region. An N-linked (GlcNAc...) asparagine glycan is attached at Asn-145. Positions 150–155 (YVIDPE) are homodimerization. A helical transmembrane segment spans residues 162–182 (FLLWILVAVSLGLFFYSFLVS). The Cytoplasmic portion of the chain corresponds to 183 to 223 (AVSLSKMLKKRSPLTTGVYVKMPPTEPECEKQFQPYFIPIN). Tyr-201 carries the phosphotyrosine; by TXK and JAK2 modification.

In terms of assembly, homodimer; disulfide-linked. Binds to CD80/B7-1 and CD86/B7.2. Interacts with ICOSLG. Post-translationally, N-glycosylation is important for dimerization. In terms of processing, phosphorylation at Tyr-201 prevents binding to the AP-2 adapter complex, blocks endocytosis, and leads to retention of CTLA4 on the cell surface. Widely expressed with highest levels in lymphoid tissues.

It localises to the cell membrane. In terms of biological role, inhibitory receptor acting as a major negative regulator of T-cell responses. The affinity of CTLA4 for its natural B7 family ligands, CD80 and CD86, is considerably stronger than the affinity of their cognate stimulatory coreceptor CD28. This Mus musculus (Mouse) protein is Cytotoxic T-lymphocyte protein 4 (Ctla4).